Reading from the N-terminus, the 366-residue chain is 15-cis-zeta-carotene isomerase, chloroplastic (366 aa).

The N-terminal 45 residues, 1-45 (MASQLRLHLAATPPLLPHRRPHLARPLCPTLNPIRAPLPPLSRVL), are a transit peptide targeting the chloroplast. A run of 6 helical transmembrane segments spans residues 94–114 (SWAY…VLWI), 136–156 (EVVM…MASL), 171–191 (VLFA…FINH), 203–223 (GITG…FFLY), 260–280 (VIWC…AASV), and 338–358 (LPYV…PLMQ).

Expressed in leaves and roots, and at lower levels in embryos and endosperm.

The protein resides in the plastid. The protein localises to the chloroplast membrane. The enzyme catalyses 9,9',15-tri-cis-zeta-carotene = 9,9'-di-cis-zeta-carotene. In terms of biological role, isomerase involved in the biosynthesis of carotenoids. Catalyzes the cis- to trans-conversion of the 15-cis-bond in 9,15,9'-tri-cis-zeta-carotene. This Zea mays (Maize) protein is 15-cis-zeta-carotene isomerase, chloroplastic.